The following is a 4644-amino-acid chain: MSEPGGGEDGSAGLEVSAVQNVADVAVLQKHLRKLVPLLLEDGGDAPAALEAALEEKSALEQMRKFLSDPQVHTVLVERSTLKEDVGDEGEEEKEFISYNINIDIHYGVKSNSLAFIKRAPVIDADKPVSSQLRVLTLSEDSPYETLHSFISNAVAPFFKSYIRESGKADRDGDKMAPSVEKKIAELEMGLLHLQQNIEIPEISLPIHPIITNVAKQCYERGEKPKVTDFGDKVEDPTFLNQLQSGVNRWIREIQKVTKLDRDPASGTALQEISFWLNLERALYRIQEKRESPEVLLTLDILKHGKRFHATVSFDTDTGLKQALETVNDYNPLMKDFPLNDLLSATELDKIRQALVAIFTHLRKIRNTKYPIQRALRLVEAISRDLSSQLLKVLGTRKLMHVAYEEFEKVMVACFEVFQTWDDEYEKLQVLLRDIVKRKREENLKMVWRINPAHRKLQARLDQMRKFRRQHEQLRAVIVRVLRPQVTAVAQQNQGEAPEPQDMKVAEVLFDAADANAIEEVNLAYENVKEVDGLDVSKEGTEAWEAAMKRYDERIDRVETRITARLRDQLGTAKNANEMFRIFSRFNALFVRPHIRGAIREYQTQLIQRVKDDIESLHDKFKVQYPQSQACKMSHVRDLPPVSGSIIWAKQIDRQLTAYMKRVEDVLGKGWENHVEGQKLKQDGDSFRMKLNTQEIFDDWARKVQQRNLGVSGRIFTIESARVRGRTGNVLKLKVNFLPEIITLSKEVRNLKWLGFRVPLAIVNKAHQANQLYPFAISLIESVRTYERTCEKVEERNTISLLVAGLKKEVQALIAEGIALVWESYKLDPYVQRLAETVFNFQEKVDDLLIIEEKIDLEVRSLETCMYDHKTFSEILNRVQKAVDDLNLHSYSNLPIWVNKLDMEIERILGVRLQAGLRAWTQVLLGQAEDKAEVDMDTDAPQVSHKPGGEPKIKNVVHELRITNQVIYLNPPIEECRYKLYQEMFAWKMVVLSLPRIQSQRYQVGVHYELTEEEKFYRNALTRMPDGPVALEESYSAVMGIVTEVEQYVKVWLQYQCLWDMQAENIYNRLGEDLNKWQALLVQIRKARGTFDNAETKKEFGPVVIDYGKVQSKVNLKYDSWHKEVLSKFGQMLGSNMTEFHSQISKSRQELEQHSVDTASTSDAVTFITYVQSLKRKIKQFEKQVELYRNGQRLLEKQRFQFPPSWLYIDNIEGEWGAFNDIMRRKDSAIQQQVANLQMKIVQEDRAVESRTTDLLTDWEKTKPVTGNLRPEEALQALTIYEGKFGRLKDDREKCAKAKEALELTDTGLLSGSEERVQVALEELQDLKGVWSELSKVWEQIDQMKEQPWVSVQPRKLRQNLDGLLNQLKNFPARLRQYASYEFVQRLLKGYMKINMLVIELKSEALKDRHWKQLMKRLHVNWVVSELTLGQIWDVDLQKNEAVVKDVLLVAQGEMALEEFLKQIREVWNTYELDLVNYQNKCRLIRGWDDLFNKVKEHINSVSAMKLSPYYKVFEEDALSWEDKLNRIMALFDVWIDVQRRWVYLEGIFTGSADIKHLLPVETQRFQSISTEFLALMKKVSKSPLVMDVLNIQGVQRSLERLADLLGKIQKALGEYLERERSSFPRFYFVGDEDLLEIIGNSKNVAKLQKHFKKMFAGVSSIILNEDNSVVLGISSREGEEVMFKTPVSITEHPKINEWLTLVEKEMRVTLAKLLAESVTEVEIFGKATSIDPNTYITWIDKYQAQLVVLSAQIAWSENVENALSNVGGGGDVGPLQSVLSNVEVTLNVLADSVLMEQPPLRRRKLEHLITELVHQRDVTRSLIKSKIDNAKSFEWLSQMRFYFDPKQTDVLQQLSIQMANAKFNYGFEYLGVQDKLVQTPLTDRCYLTMTQALEARLGGSPFGPAGTGKTESVKALGHQLGRFVLVFNCDETFDFQAMGRIFVGLCQVGAWGCFDEFNRLEERMLSAVSQQVQCIQEALREHSNPNYDKTSAPITCELLNKQVKVSPDMAIFITMNPGYAGRSNLPDNLKKLFRSLAMTKPDRQLIAQVMLYSQGFRTAEVLANKIVPFFKLCDEQLSSQSHYDFGLRALKSVLVSAGNVKRERIQKIKREKEERGEAVDEGEIAENLPEQEILIQSVCETMVPKLVAEDIPLLFSLLSDVFPGVQYHRGEMTALREELKKVCQEMYLTYGDGEEVGGMWVEKVLQLYQITQINHGLMMVGPSGSGKSMAWRVLLKALERLEGVEGVAHIIDPKAISKDHLYGTLDPNTREWTDGLFTHVLRKIIDNVRGELQKRQWIVFDGDVDPEWVENLNSVLDDNKLLTLPNGERLSLPPNVRIMFEVQDLKYATLATVSRCGMVWFSEDVLSTDMIFNNFLARLRSIPLDEGEDEAQRRRKGKEDEGEEAASPMLQIQRDAATIMQPYFTSNGLVTKALEHAFKLEHIMDLTRLRCLGSLFSMLHQACRNVAQYNANHPDFPMQIEQLERYIQRYLVYAILWSLSGDSRLKMRAELGEYIRRITTVPLPTAPNVPIIDYEVSISGEWSPWQAKVPQIEVETHKVAAPDVVVPTLDTVRHEALLYTWLAEHKPLVLCGPPGSGKTMTLFSALRALPDMEVVGLNFSSATTPELLLKTFDHYCEYRRTPNGVVLAPVQLGKWLVLFCDEINLPDMDKYGTQRVISFIRQMVEHGGFYRTSDQTWVKLERIQFVGACNPPTDPGRKPLSHRFLRHVPVVYVDYPGPASLTQIYGTFNRAMLRLIPSLRTYAEPLTAAMVEFYTMSQERFTQDTQPHYIYSPREMTRWVRGIFEALRPLETLPVEGLIRIWAHEALRLFQDRLVEDEERRWTDENIDMVALKHFPNIDKEKAMSRPILYSNWLSKDYIPVDQEELRDYVKARLKVFYEEELDVPLVLFNEVLDHVLRIDRIFRQPQGHLLLIGVSGAGKTTLSRFVAWMNGLSVYQIKVHRKYTGEDFDEDLRTVLRRSGCKNEKIAFIMDESNVLDSGFLERMNTLLANGEVPGLFEGDEYATLMTQCKEGAQKEGLMLDSHEELYKWFTSQVIRNLHVVFTMNPSSEGLKDRAATSPALFNRCVLNWFGDWSTEALYQVGKEFTSKMDLEKPNYIVPDYMPVVYDKLPQPPTHREAIVNSCVFVHQTLHQANARLAKRGGRTMAITPRHYLDFINHYANLFHEKRSELEEQQMHLNVGLRKIKETVDQVEELRRDLRIKSQELEVKNAAANDKLKKMVKDQQEAEKKKVMSQEIQEQLHKQQEVIADKQMSVKEDLDKVEPAVIEAQNAVKSIKKQHLVEVRSMANPPAAVKLALESICLLLGESTTDWKQIRSIIMRENFIPTIVNFSAEEISDAIREKMKKNYMSNPSYNYEIVNRASLACGPMVKWAIAQLNYADMLKRVEPLRNELQKLEDDAKDNQQKANEVEQMIRDLEASIARYKEEYAVLISEAQAIKADLAAVEAKVNRSTALLKSLSAERERWEKTSETFKNQMSTIAGDCLLSAAFIAYAGYFDQQMRQNLFTTWSHHLQQANIQFRTDIARTEYLSNADERLRWQASSLPADDLCTENAIMLKRFNRYPLIIDPSGQATEFIMNEYKDRKITRTSFLDDAFRKNLESALRFGNPLLVQDVESYDPVLNPVLNREVRRTGGRVLITLGDQDIDLSPSFVIFLSTRDPTVEFPPDLCSRVTFVNFTVTRSSLQSQCLNEVLKAERPDVDEKRSDLLKLQGEFQLRLRQLEKSLLQALNEVKGRILDDDTIITTLENLKREAAEVTRKVEETDIVMQEVETVSQQYLPLSTACSSIYFTMESLKQVHFLYQYSLQFFLDIYHNVLYENPNLKGATDHTQRLSIITKDLFQVAFNRVARGMLHQDHITFAMLLARIKLKGTVGEPTYDAEFQHFLRGKEIVLSAGSTPKIQGLTVEQAEAVVRLSCLPAFKDLIAKVQADEQFGIWLDSSSPEQTVPYLWSEETPTTPIGQAIHRLLLIQAFRPDRLLAMAHMFVSTNLGESFMSIMEQPLDLTHIVGTEVKPNTPVLMCSVPGYDASGHVEDLAAEQNTQITSIAIGSAEGFNQADKAINTAVKSGRWVMLKNVHLAPGWLMQLEKKLHSLQPHACFRLFLTMEINPKVPVNLLRAGRIFVFEPPPGVKANMLRTFSSIPVSRICKSPNERARLYFLLAWFHAIIQERLRYAPLGWSKKYEFGESDLRSACDTVDTWLDDTAKGRQNISPDKIPWSALKTLMAQSIYGGRVDNEFDQRLLNTFLERLFTTRSFDSEFKLACKVDGHKDIQMPDGIRREEFVQWVELLPDAQTPSWLGLPNNAERVLLTTQGVDMISKMLKMQMLEDEDDLAYAETEKKARTDSTSDGRPAWMRTLHTTASNWLHLIPQTLSPLKRTVENIKDPLFRFFEREVKMGAKLLQDVRQDLADVVQVCEGKKKQTNYLRTLINELVKGILPRSWSHYTVPAGMTVIQWVSDFSERIKQLQNISQAAASGGAKELKNIHVCLGGLFVPEAYITATRQYVAQANSWSLEELCLEVNVTASQSATLDACSFGVTGLKLQGATCSNNKLSLSNAISTVLPLTQLRWVKQTSAEKKASVVTLPVYLNFTRADLIFTVDFEIATKEDPRSFYERGVAVLCTE.

Ser2 is modified (N-acetylserine). A stem region spans residues Ser2–Asn1865. Coiled-coil stretches lie at residues Ala48–Asp69, Ser179–Ile200, Ala453–Ala476, and Thr541–Ala564. Ser68 carries the post-translational modification Phosphoserine. The interaction with DYNC1I2 stretch occupies residues Met446–Ala701. The interval Ala649–Ser800 is interaction with DYNC1LI2. Residue Lys1123 is modified to N6-acetyllysine. A coiled-coil region spans residues Thr1169–Gln1201. Ser1228 is subject to Phosphoserine. Coiled-coil stretches lie at residues Ala1229–Ser1250 and Arg1355–Phe1371. 4 AAA regions span residues Tyr1866–Ser2097, Glu2178–Leu2450, Glu2554–Gly2803, and Val2897–Thr3166. ATP-binding positions include Gly1904–Thr1911 and Gly2222–Ser2229. Positions Gly2388–Ser2408 are disordered. Residues Gly2593–Thr2600 and Gly2935–Thr2942 each bind ATP. 3 coiled-coil regions span residues Glu3187–Gln3273, Ala3394–Met3498, and Glu3735–Gln3798. The stalk stretch occupies residues Glu3187–Met3498. Lys3478 carries the N6-acetyllysine modification. 2 AAA regions span residues Leu3551–Arg3780 and Ala4003–Thr4219. The residue at position 4160 (Ser4160) is a Phosphoserine. Position 4281 is an N6-acetyllysine (Lys4281). Position 4364 is a phosphothreonine (Thr4364). Ser4366 bears the Phosphoserine mark.

It belongs to the dynein heavy chain family. Homodimer. The cytoplasmic dynein 1 complex consists of two catalytic heavy chains (HCs) and a number of non-catalytic subunits presented by intermediate chains (ICs), light intermediate chains (LICs) and light chains (LCs); the composition seems to vary in respect to the IC, LIC and LC composition. The heavy chain homodimer serves as a scaffold for the probable homodimeric assembly of the respective non-catalytic subunits. The ICs and LICs bind directly to the HC dimer and dynein LCs assemble on the IC dimer. Interacts with DYNC1LI1; DYNC1LI1 and DYNC1LI2 bind mutually exclusive to DYNC1H1. Interacts with DYNC1LI2; DYNC1LI1 and DYNC1LI2 bind mutually exclusive to DYNC1H1. Interacts with DYNC1I2. Interacts with BICD2. Interacts with DNALI1.

The protein resides in the cytoplasm. Its subcellular location is the cytoskeleton. Functionally, cytoplasmic dynein 1 acts as a motor for the intracellular retrograde motility of vesicles and organelles along microtubules. Dynein has ATPase activity; the force-producing power stroke is thought to occur on release of ADP. Plays a role in mitotic spindle assembly and metaphase plate congression. The polypeptide is Cytoplasmic dynein 1 heavy chain 1 (Dync1h1) (Mus musculus (Mouse)).